Here is a 263-residue protein sequence, read N- to C-terminus: tRNA (guanine-N(7)-)-methyltransferase (263 aa).

Over residues 1–10 (MLPQDPSTEP) the composition is skewed to polar residues. The tract at residues 1-38 (MLPQDPSTEPTPADDAAPVDSAGQASAPSPADPEGVAH) is disordered. Glutamate 91, glutamate 116, aspartate 143, and aspartate 166 together coordinate S-adenosyl-L-methionine. The active site involves aspartate 166. A substrate-binding site is contributed by lysine 170. The segment at 172 to 177 (RHNKRR) is interaction with RNA. Residues aspartate 202 and 240-243 (TKFE) contribute to the substrate site.

It belongs to the class I-like SAM-binding methyltransferase superfamily. TrmB family.

The enzyme catalyses guanosine(46) in tRNA + S-adenosyl-L-methionine = N(7)-methylguanosine(46) in tRNA + S-adenosyl-L-homocysteine. Its pathway is tRNA modification; N(7)-methylguanine-tRNA biosynthesis. In terms of biological role, catalyzes the formation of N(7)-methylguanine at position 46 (m7G46) in tRNA. The sequence is that of tRNA (guanine-N(7)-)-methyltransferase from Cupriavidus necator (strain ATCC 17699 / DSM 428 / KCTC 22496 / NCIMB 10442 / H16 / Stanier 337) (Ralstonia eutropha).